Here is a 548-residue protein sequence, read N- to C-terminus: Chaperonin GroEL 2 (548 aa).

ATP-binding positions include 30–33 (TLGP), Lys-51, 87–91 (DGTTT), Gly-415, 479–481 (NAA), and Asp-495. The segment at 524–548 (APKDAPPTAPAGVPGAGAGGPGFDF) is disordered. Positions 537 to 548 (PGAGAGGPGFDF) are enriched in gly residues.

The protein belongs to the chaperonin (HSP60) family. In terms of assembly, forms a cylinder of 14 subunits composed of two heptameric rings stacked back-to-back. Interacts with the co-chaperonin GroES.

The protein resides in the cytoplasm. The catalysed reaction is ATP + H2O + a folded polypeptide = ADP + phosphate + an unfolded polypeptide.. Functionally, together with its co-chaperonin GroES, plays an essential role in assisting protein folding. The GroEL-GroES system forms a nano-cage that allows encapsulation of the non-native substrate proteins and provides a physical environment optimized to promote and accelerate protein folding. The sequence is that of Chaperonin GroEL 2 from Burkholderia pseudomallei (strain 668).